We begin with the raw amino-acid sequence, 350 residues long: Ion-translocating oxidoreductase complex subunit D (350 aa).

Transmembrane regions (helical) follow at residues 20–40 (VMVLVILCLIPGVFLQSYFFG), 44–64 (LIQISLACLAALASEAFILKI), 68–88 (PVLNTLKDASALLTAILLAIS), 89–109 (IPPLAPWWIVVIGTIFAIIFV), and 125–145 (MAGYVLLLISFPVQMTSWLPV). At threonine 187 the chain carries FMN phosphoryl threonine. The next 5 membrane-spanning stretches (helical) occupy residues 215–235 (SWQQIYWINGAFLAGGLILLF), 241–261 (WHIPMSFLLGIGIFSFIAFAY), 267–287 (APPLFHLFSGATMLGAFFILS), 300–320 (ILYALLIAFIVVIIRNVGGYP), and 322–342 (AVAFAVLLGNMCVPLIDYYTQ).

The protein belongs to the NqrB/RnfD family. In terms of assembly, the complex is composed of six subunits: RnfA, RnfB, RnfC, RnfD, RnfE and RnfG. FMN serves as cofactor.

It localises to the cell inner membrane. Part of a membrane-bound complex that couples electron transfer with translocation of ions across the membrane. In Psychromonas ingrahamii (strain DSM 17664 / CCUG 51855 / 37), this protein is Ion-translocating oxidoreductase complex subunit D.